The chain runs to 442 residues: Chromosomal replication initiator protein DnaA (442 aa).

A domain I, interacts with DnaA modulators region spans residues 1–68 (MDAWPRCLER…ELLAYFVGNG (68 aa)). Residues 68–104 (GDVALAVGSRPRAPEPAPAPVAVPSAPQAAPIVPFAG) are domain II. The domain III, AAA+ region stretch occupies residues 105 to 322 (NLDSHYTFAN…GALNTLVARA (218 aa)). Glycine 150, glycine 152, lysine 153, and threonine 154 together coordinate ATP. The segment at 323 to 442 (NFTGRSITVE…WEKLIRKLSE (120 aa)) is domain IV, binds dsDNA.

This sequence belongs to the DnaA family. In terms of assembly, oligomerizes as a right-handed, spiral filament on DNA at oriC.

It localises to the cytoplasm. Plays an essential role in the initiation and regulation of chromosomal replication. ATP-DnaA binds to the origin of replication (oriC) to initiate formation of the DNA replication initiation complex once per cell cycle. Binds the DnaA box (a 9 base pair repeat at the origin) and separates the double-stranded (ds)DNA. Forms a right-handed helical filament on oriC DNA; dsDNA binds to the exterior of the filament while single-stranded (ss)DNA is stabiized in the filament's interior. The ATP-DnaA-oriC complex binds and stabilizes one strand of the AT-rich DNA unwinding element (DUE), permitting loading of DNA polymerase. After initiation quickly degrades to an ADP-DnaA complex that is not apt for DNA replication. Binds acidic phospholipids. The polypeptide is Chromosomal replication initiator protein DnaA (Xanthomonas axonopodis pv. citri (strain 306)).